A 152-amino-acid chain; its full sequence is Deoxyuridine 5'-triphosphate nucleotidohydrolase (152 aa).

Substrate-binding positions include 71-73, Asn84, and 88-90; these read RSG and TID.

This sequence belongs to the dUTPase family. The cofactor is Mg(2+).

It catalyses the reaction dUTP + H2O = dUMP + diphosphate + H(+). Its pathway is pyrimidine metabolism; dUMP biosynthesis; dUMP from dCTP (dUTP route): step 2/2. In terms of biological role, this enzyme is involved in nucleotide metabolism: it produces dUMP, the immediate precursor of thymidine nucleotides and it decreases the intracellular concentration of dUTP so that uracil cannot be incorporated into DNA. In Roseobacter denitrificans (strain ATCC 33942 / OCh 114) (Erythrobacter sp. (strain OCh 114)), this protein is Deoxyuridine 5'-triphosphate nucleotidohydrolase.